A 122-amino-acid polypeptide reads, in one-letter code: Large ribosomal subunit protein uL14 (122 aa).

Belongs to the universal ribosomal protein uL14 family. As to quaternary structure, part of the 50S ribosomal subunit. Forms a cluster with proteins L3 and L19. In the 70S ribosome, L14 and L19 interact and together make contacts with the 16S rRNA in bridges B5 and B8.

Its function is as follows. Binds to 23S rRNA. Forms part of two intersubunit bridges in the 70S ribosome. The chain is Large ribosomal subunit protein uL14 from Acidiphilium cryptum (strain JF-5).